Here is a 334-residue protein sequence, read N- to C-terminus: Flotillin-like protein FloA (334 aa).

Residues Leu3–Leu23 traverse the membrane as a helical segment.

It belongs to the flotillin-like FloA family. As to quaternary structure, homooligomerizes.

It is found in the cell membrane. The protein localises to the membrane raft. In terms of biological role, found in functional membrane microdomains (FMM) that may be equivalent to eukaryotic membrane rafts. FMMs are highly dynamic and increase in number as cells age. Flotillins are thought to be important factors in membrane fluidity. The polypeptide is Flotillin-like protein FloA (Opitutus terrae (strain DSM 11246 / JCM 15787 / PB90-1)).